The sequence spans 729 residues: Catalase-peroxidase 1 (729 aa).

A cross-link (tryptophyl-tyrosyl-methioninium (Trp-Tyr) (with M-252)) is located at residues 98 to 226 (WHSAGSYRIA…LAAVMMGLIY (129 aa)). The active-site Proton acceptor is the His-99. The segment at residues 226–252 (YVNPEGVDGNPDPLRTAKDIRETFARM) is a cross-link (tryptophyl-tyrosyl-methioninium (Tyr-Met) (with W-98)). A heme b-binding site is contributed by His-267.

It belongs to the peroxidase family. Peroxidase/catalase subfamily. In terms of assembly, homodimer or homotetramer. Requires heme b as cofactor. Post-translationally, formation of the three residue Trp-Tyr-Met cross-link is important for the catalase, but not the peroxidase activity of the enzyme.

The enzyme catalyses H2O2 + AH2 = A + 2 H2O. It catalyses the reaction 2 H2O2 = O2 + 2 H2O. Bifunctional enzyme with both catalase and broad-spectrum peroxidase activity. The sequence is that of Catalase-peroxidase 1 from Cellvibrio japonicus (strain Ueda107) (Pseudomonas fluorescens subsp. cellulosa).